The chain runs to 1496 residues: Chromosome partition protein MukB (1496 aa).

63 to 70 (GGNGAGKS) provides a ligand contact to ATP. Coiled coils occupy residues 328 to 493 (KLEL…QRLS) and 536 to 632 (KMQA…APAW). Residues 694 to 811 (PDGSDDVRLN…EVPLFGRAAR (118 aa)) form a flexible hinge region. 2 coiled-coil regions span residues 861 to 1171 (NPEE…SAEE) and 1235 to 1291 (IDAI…LQNI). Over residues 1082–1091 (RARSRRDELQ) the composition is skewed to basic and acidic residues. A disordered region spans residues 1082-1101 (RARSRRDELQQRLSQQRSRK).

This sequence belongs to the SMC family. MukB subfamily. In terms of assembly, homodimerization via its hinge domain. Binds to DNA via its C-terminal region. Interacts, and probably forms a ternary complex, with MukE and MukF via its C-terminal region. The complex formation is stimulated by calcium or magnesium. Interacts with tubulin-related protein FtsZ.

It localises to the cytoplasm. Its subcellular location is the nucleoid. Its function is as follows. Plays a central role in chromosome condensation, segregation and cell cycle progression. Functions as a homodimer, which is essential for chromosome partition. Involved in negative DNA supercoiling in vivo, and by this means organize and compact chromosomes. May achieve or facilitate chromosome segregation by condensation DNA from both sides of a centrally located replisome during cell division. This chain is Chromosome partition protein MukB, found in Actinobacillus pleuropneumoniae serotype 7 (strain AP76).